The following is a 271-amino-acid chain: Glutamate racemase (271 aa).

Residues 12 to 13 and 44 to 45 each bind substrate; these read DS and YG. C75 (proton donor/acceptor) is an active-site residue. Residue 76–77 coordinates substrate; it reads NT. The active-site Proton donor/acceptor is C185. Position 186 to 187 (186 to 187) interacts with substrate; it reads TH.

This sequence belongs to the aspartate/glutamate racemases family.

It catalyses the reaction L-glutamate = D-glutamate. It participates in cell wall biogenesis; peptidoglycan biosynthesis. Functionally, provides the (R)-glutamate required for cell wall biosynthesis. The chain is Glutamate racemase from Mycobacterium marinum (strain ATCC BAA-535 / M).